We begin with the raw amino-acid sequence, 212 residues long: Thymidylate kinase (212 aa).

11–18 (GLEGAGKT) is an ATP binding site.

This sequence belongs to the thymidylate kinase family.

The catalysed reaction is dTMP + ATP = dTDP + ADP. Phosphorylation of dTMP to form dTDP in both de novo and salvage pathways of dTTP synthesis. In Buchnera aphidicola subsp. Acyrthosiphon pisum (strain APS) (Acyrthosiphon pisum symbiotic bacterium), this protein is Thymidylate kinase (tmk).